The sequence spans 105 residues: Large ribosomal subunit protein bL21 (105 aa).

This sequence belongs to the bacterial ribosomal protein bL21 family. Part of the 50S ribosomal subunit. Contacts protein L20.

This protein binds to 23S rRNA in the presence of protein L20. The sequence is that of Large ribosomal subunit protein bL21 from Rhizobium johnstonii (strain DSM 114642 / LMG 32736 / 3841) (Rhizobium leguminosarum bv. viciae).